The following is a 165-amino-acid chain: SsrA-binding protein (165 aa).

A compositionally biased stretch (basic and acidic residues) spans 135–158 (QAHDKRQDMARRDAQREVTRELGR). Positions 135-165 (QAHDKRQDMARRDAQREVTRELGRRVKGMTN) are disordered.

It belongs to the SmpB family.

The protein resides in the cytoplasm. In terms of biological role, required for rescue of stalled ribosomes mediated by trans-translation. Binds to transfer-messenger RNA (tmRNA), required for stable association of tmRNA with ribosomes. tmRNA and SmpB together mimic tRNA shape, replacing the anticodon stem-loop with SmpB. tmRNA is encoded by the ssrA gene; the 2 termini fold to resemble tRNA(Ala) and it encodes a 'tag peptide', a short internal open reading frame. During trans-translation Ala-aminoacylated tmRNA acts like a tRNA, entering the A-site of stalled ribosomes, displacing the stalled mRNA. The ribosome then switches to translate the ORF on the tmRNA; the nascent peptide is terminated with the 'tag peptide' encoded by the tmRNA and targeted for degradation. The ribosome is freed to recommence translation, which seems to be the essential function of trans-translation. This chain is SsrA-binding protein, found in Mycolicibacterium gilvum (strain PYR-GCK) (Mycobacterium gilvum (strain PYR-GCK)).